Here is a 361-residue protein sequence, read N- to C-terminus: 5-formaminoimidazole-4-carboxamide-1-(beta)-D-ribofuranosyl 5'-monophosphate synthetase (361 aa).

Positions 27 and 94 each coordinate 5-amino-1-(5-phospho-beta-D-ribosyl)imidazole-4-carboxamide. The 233-residue stretch at 116-348 (RAILRWEAER…MGQRIAKEIK (233 aa)) folds into the ATP-grasp domain. Residues 146-208 (PDEI…ANYC) and glutamate 230 each bind ATP. Residue asparagine 258 participates in 5-amino-1-(5-phospho-beta-D-ribosyl)imidazole-4-carboxamide binding. Residues glutamine 297 and glutamate 310 each contribute to the Mg(2+) site.

It belongs to the phosphohexose mutase family. Requires Mg(2+) as cofactor. The cofactor is Mn(2+).

It catalyses the reaction 5-amino-1-(5-phospho-beta-D-ribosyl)imidazole-4-carboxamide + formate + ATP = 5-formamido-1-(5-phospho-D-ribosyl)imidazole-4-carboxamide + ADP + phosphate. Its pathway is purine metabolism; IMP biosynthesis via de novo pathway; 5-formamido-1-(5-phospho-D-ribosyl)imidazole-4-carboxamide from 5-amino-1-(5-phospho-D-ribosyl)imidazole-4-carboxamide (formate route): step 1/1. Its function is as follows. Catalyzes the ATP- and formate-dependent formylation of 5-aminoimidazole-4-carboxamide-1-beta-d-ribofuranosyl 5'-monophosphate (AICAR) to 5-formaminoimidazole-4-carboxamide-1-beta-d-ribofuranosyl 5'-monophosphate (FAICAR) in the absence of folates. This chain is 5-formaminoimidazole-4-carboxamide-1-(beta)-D-ribofuranosyl 5'-monophosphate synthetase, found in Methanococcus maripaludis (strain DSM 14266 / JCM 13030 / NBRC 101832 / S2 / LL).